Reading from the N-terminus, the 421-residue chain is Zinc finger protein Pegasus (421 aa).

A disordered region spans residues 35–55 (GDKEAETLQGAGTEGDQNGLD). C2H2-type zinc fingers lie at residues 82–104 (LKCR…IRIH), 110–132 (HRCH…MRSH), and 138–161 (YKCE…RRKH). Positions 229 to 238 (SMTKSSQTSG) are enriched in polar residues. 2 disordered regions span residues 229 to 249 (SMTK…LMVD) and 292 to 358 (QPAT…PTLP). The span at 292-313 (QPATPAVVSSVSASIAQSSSPT) shows a compositional bias: low complexity. Positions 339-351 (HTSTPSISNSQPS) are enriched in polar residues. 2 C2H2-type zinc fingers span residues 366-388 (HHCQ…MGCH) and 394-418 (FQCN…RGQH).

Belongs to the Ikaros C2H2-type zinc-finger protein family. As to quaternary structure, probably self-associates.

It localises to the nucleus. Its function is as follows. Transcriptional repressor that binds the core 5'GNNTGTNG-3' DNA consensus sequence. The protein is Zinc finger protein Pegasus (IKZF5) of Gallus gallus (Chicken).